Here is a 508-residue protein sequence, read N- to C-terminus: Maturase K (508 aa).

It belongs to the intron maturase 2 family. MatK subfamily.

Its subcellular location is the plastid. The protein localises to the chloroplast. Functionally, usually encoded in the trnK tRNA gene intron. Probably assists in splicing its own and other chloroplast group II introns. The polypeptide is Maturase K (Cunninghamia lanceolata (China fir)).